We begin with the raw amino-acid sequence, 213 residues long: Putative transmembrane protein DDB_G0267860 (213 aa).

An N-terminal signal peptide occupies residues 1 to 22 (MKTKILLLNFIIIFFLINVNLA). Topologically, residues 23–191 (IKKDSPFKEI…SSKFDSSTSS (169 aa)) are extracellular. N92 and N114 each carry an N-linked (GlcNAc...) asparagine glycan. The helical transmembrane segment at 192–212 (ISINTLAILSLLFLIFINKLI) threads the bilayer. Position 213 (N213) is a topological domain, cytoplasmic.

The protein localises to the membrane. This Dictyostelium discoideum (Social amoeba) protein is Putative transmembrane protein DDB_G0267860.